We begin with the raw amino-acid sequence, 251 residues long: Phosphate import ATP-binding protein PstB 2 (251 aa).

Positions 5 to 246 constitute an ABC transporter domain; it reads ITSKDVHLSY…PKKQITSDYL (242 aa). 37-44 is a binding site for ATP; that stretch reads GPSGCGKS.

Belongs to the ABC transporter superfamily. Phosphate importer (TC 3.A.1.7) family. In terms of assembly, the complex is composed of two ATP-binding proteins (PstB), two transmembrane proteins (PstC and PstA) and a solute-binding protein (PstS).

It is found in the cell membrane. It catalyses the reaction phosphate(out) + ATP + H2O = ADP + 2 phosphate(in) + H(+). Its function is as follows. Part of the ABC transporter complex PstSACB involved in phosphate import. Responsible for energy coupling to the transport system. This chain is Phosphate import ATP-binding protein PstB 2, found in Lactobacillus johnsonii (strain CNCM I-12250 / La1 / NCC 533).